Consider the following 343-residue polypeptide: MRN complex-interacting protein (343 aa).

The tract at residues 75–104 is disordered; that stretch reads EETVSASEEENVGHQQAGNVKQQEKSQPSE. Positions 87–104 are enriched in polar residues; sequence GHQQAGNVKQQEKSQPSE. Residues Ser100 and Ser115 each carry the phosphoserine modification. Disordered stretches follow at residues 128-178, 193-212, and 230-324; these read SKQP…WGPQ, SPCL…RGPG, and AQFV…AQNP. The Nuclear localization signal (NLS) motif lies at 148–151; the sequence is RKRK. Residues 193–202 show a composition bias toward polar residues; it reads SPCLQENSAD. The necessary for the association with the MRN complex stretch occupies residues 213–237; it reads KELWSPIQQVTATSSKWAQFVLPPR. The segment covering 240–255 has biased composition (basic and acidic residues); it reads SHVDSEQPRSLQRDPR.

It belongs to the MRNIP family. As to quaternary structure, associates with the MRE11-RAD50-NBN (MRN) damage-sensing complex; this association is constitutive. Interacts with MRE11. Interacts with NBN. Interacts with RAD50. In terms of processing, phosphorylated; phosphorylation is constitutive and occurs in the absence of any DNA-damaging stimulus. Phosphorylation on Ser-115 is necessary for its nuclear retention.

It localises to the nucleus. The protein resides in the nucleoplasm. In terms of biological role, plays a role in the cellular response to DNA damage and the maintenance of genome stability through its association with the MRN damage-sensing complex. Promotes chromatin loading and activity of the MRN complex to facilitate subsequent ATM-mediated DNA damage response signaling and DNA repair. The chain is MRN complex-interacting protein from Homo sapiens (Human).